A 66-amino-acid chain; its full sequence is Protein I177L (66 aa).

N-linked (GlcNAc...) asparagine; by host glycosylation occurs at asparagine 11.

Belongs to the asfivirus I177L family.

It localises to the virion. The sequence is that of Protein I177L from African swine fever virus (strain Badajoz 1971 Vero-adapted) (Ba71V).